The chain runs to 294 residues: Picrinine-N-methytransferase TMT2 (294 aa).

The SAM motif I stretch occupies residues 75 to 84; the sequence is LLDVGCGLGG. Positions 137–143 match the Vacuolar targeting signal motif; it reads DGEFDVV. The interval 138–146 is SAM motif II; that stretch reads GEFDVVFTL. The tract at residues 165–174 is SAM motif III; the sequence is VGSPGAAIVV.

Belongs to the class I-like SAM-binding methyltransferase superfamily. gTMT family. As to quaternary structure, homodimer.

It localises to the vacuole membrane. The enzyme catalyses picrinine + S-adenosyl-L-methionine = ervincine + S-adenosyl-L-homocysteine + H(+). It functions in the pathway alkaloid biosynthesis; vindoline biosynthesis. S-adenosyl-L-methionine-dependent N-methyltransferase involved in the biosynthesis of biologically active monoterpenoid indole alkaloids (MIAs) natural products including vindoline. Catalyzes the conversion of picrinine to N-methylpicrinine (ervincine). In Catharanthus roseus (Madagascar periwinkle), this protein is Picrinine-N-methytransferase TMT2.